Consider the following 442-residue polypeptide: tRNA modification GTPase MnmE (442 aa).

(6S)-5-formyl-5,6,7,8-tetrahydrofolate is bound by residues Arg-21, Glu-79, and Lys-118. The TrmE-type G domain maps to 214-367 (GFKIAIVGKP…LKEELQNYLN (154 aa)). Asn-224 provides a ligand contact to K(+). GTP is bound by residues 224 to 229 (NVGKSS), 243 to 249 (SDIAGTT), and 268 to 271 (DTAG). Ser-228 lines the Mg(2+) pocket. K(+) is bound by residues Ser-243, Ile-245, and Thr-248. Thr-249 is a binding site for Mg(2+). Lys-442 is a binding site for (6S)-5-formyl-5,6,7,8-tetrahydrofolate.

It belongs to the TRAFAC class TrmE-Era-EngA-EngB-Septin-like GTPase superfamily. TrmE GTPase family. Homodimer. Heterotetramer of two MnmE and two MnmG subunits. The cofactor is K(+).

Its subcellular location is the cytoplasm. Exhibits a very high intrinsic GTPase hydrolysis rate. Involved in the addition of a carboxymethylaminomethyl (cmnm) group at the wobble position (U34) of certain tRNAs, forming tRNA-cmnm(5)s(2)U34. The sequence is that of tRNA modification GTPase MnmE from Campylobacter jejuni subsp. jejuni serotype O:23/36 (strain 81-176).